Consider the following 342-residue polypeptide: Anthranilate phosphoribosyltransferase (342 aa).

5-phospho-alpha-D-ribose 1-diphosphate is bound by residues glycine 84, 87 to 88 (GD), threonine 92, 94 to 97 (NIST), 112 to 120 (KHGGRSVSS), and serine 124. Glycine 84 contacts anthranilate. Serine 96 provides a ligand contact to Mg(2+). Arginine 170 contacts anthranilate. Residues aspartate 229 and glutamate 230 each coordinate Mg(2+).

This sequence belongs to the anthranilate phosphoribosyltransferase family. Homodimer. Mg(2+) serves as cofactor.

The catalysed reaction is N-(5-phospho-beta-D-ribosyl)anthranilate + diphosphate = 5-phospho-alpha-D-ribose 1-diphosphate + anthranilate. It functions in the pathway amino-acid biosynthesis; L-tryptophan biosynthesis; L-tryptophan from chorismate: step 2/5. Catalyzes the transfer of the phosphoribosyl group of 5-phosphorylribose-1-pyrophosphate (PRPP) to anthranilate to yield N-(5'-phosphoribosyl)-anthranilate (PRA). This chain is Anthranilate phosphoribosyltransferase, found in Verminephrobacter eiseniae (strain EF01-2).